The primary structure comprises 173 residues: Co-chaperone protein HscB (173 aa).

Residues 2–74 (DYFTLFGLPA…LKRAEYMLSL (73 aa)) form the J domain.

Belongs to the HscB family. In terms of assembly, interacts with HscA and stimulates its ATPase activity. Interacts with IscU.

Co-chaperone involved in the maturation of iron-sulfur cluster-containing proteins. Seems to help targeting proteins to be folded toward HscA. The chain is Co-chaperone protein HscB from Photorhabdus laumondii subsp. laumondii (strain DSM 15139 / CIP 105565 / TT01) (Photorhabdus luminescens subsp. laumondii).